Here is a 65-residue protein sequence, read N- to C-terminus: Conotoxin mr5.1b (65 aa).

Positions 1–19 are cleaved as a signal peptide; the sequence is MRCVPVFVILLLLIASAPS. The propeptide occupies 20–48; sequence VDARLKTKDDMPLPSSHANIKRTLQMLRN. At Glu60 the chain carries 4-carboxyglutamate.

It belongs to the conotoxin T superfamily. Post-translationally, contains 2 disulfide bonds that can be either 'C1-C3, C2-C4' or 'C1-C4, C2-C3', since these disulfide connectivities have been observed for conotoxins with cysteine framework V (for examples, see AC P0DQQ7 and AC P81755). In terms of tissue distribution, expressed by the venom duct.

The protein resides in the secreted. The polypeptide is Conotoxin mr5.1b (Conus marmoreus (Marble cone)).